The primary structure comprises 347 residues: Holliday junction branch migration complex subunit RuvB (347 aa).

Residues 4-185 (TDRLITPAPL…FGIISRLEFY (182 aa)) form a large ATPase domain (RuvB-L) region. ATP-binding positions include Leu24, Arg25, Gly66, Lys69, Thr70, Thr71, 132–134 (EDY), Arg175, Tyr185, and Arg222. Thr70 contacts Mg(2+). The small ATPAse domain (RuvB-S) stretch occupies residues 186–256 (SVEELTQIVM…VADAALLMLD (71 aa)). A head domain (RuvB-H) region spans residues 259-347 (AIGLDVMDRK…LSADLWDEKQ (89 aa)). DNA contacts are provided by Arg295, Arg314, and Arg319.

The protein belongs to the RuvB family. Homohexamer. Forms an RuvA(8)-RuvB(12)-Holliday junction (HJ) complex. HJ DNA is sandwiched between 2 RuvA tetramers; dsDNA enters through RuvA and exits via RuvB. An RuvB hexamer assembles on each DNA strand where it exits the tetramer. Each RuvB hexamer is contacted by two RuvA subunits (via domain III) on 2 adjacent RuvB subunits; this complex drives branch migration. In the full resolvosome a probable DNA-RuvA(4)-RuvB(12)-RuvC(2) complex forms which resolves the HJ.

The protein resides in the cytoplasm. It carries out the reaction ATP + H2O = ADP + phosphate + H(+). Its function is as follows. The RuvA-RuvB-RuvC complex processes Holliday junction (HJ) DNA during genetic recombination and DNA repair, while the RuvA-RuvB complex plays an important role in the rescue of blocked DNA replication forks via replication fork reversal (RFR). RuvA specifically binds to HJ cruciform DNA, conferring on it an open structure. The RuvB hexamer acts as an ATP-dependent pump, pulling dsDNA into and through the RuvAB complex. RuvB forms 2 homohexamers on either side of HJ DNA bound by 1 or 2 RuvA tetramers; 4 subunits per hexamer contact DNA at a time. Coordinated motions by a converter formed by DNA-disengaged RuvB subunits stimulates ATP hydrolysis and nucleotide exchange. Immobilization of the converter enables RuvB to convert the ATP-contained energy into a lever motion, pulling 2 nucleotides of DNA out of the RuvA tetramer per ATP hydrolyzed, thus driving DNA branch migration. The RuvB motors rotate together with the DNA substrate, which together with the progressing nucleotide cycle form the mechanistic basis for DNA recombination by continuous HJ branch migration. Branch migration allows RuvC to scan DNA until it finds its consensus sequence, where it cleaves and resolves cruciform DNA. In Nitrosospira multiformis (strain ATCC 25196 / NCIMB 11849 / C 71), this protein is Holliday junction branch migration complex subunit RuvB.